The sequence spans 250 residues: Triosephosphate isomerase (250 aa).

Position 9 to 11 (9 to 11 (NWK)) interacts with substrate. The active-site Electrophile is the His-95. The Proton acceptor role is filled by Glu-167. Substrate contacts are provided by residues Gly-173, Ser-212, and 233–234 (GG).

Belongs to the triosephosphate isomerase family. In terms of assembly, homodimer.

The protein localises to the cytoplasm. The enzyme catalyses D-glyceraldehyde 3-phosphate = dihydroxyacetone phosphate. It participates in carbohydrate biosynthesis; gluconeogenesis. It functions in the pathway carbohydrate degradation; glycolysis; D-glyceraldehyde 3-phosphate from glycerone phosphate: step 1/1. Involved in the gluconeogenesis. Catalyzes stereospecifically the conversion of dihydroxyacetone phosphate (DHAP) to D-glyceraldehyde-3-phosphate (G3P). The protein is Triosephosphate isomerase of Endomicrobium trichonymphae.